The primary structure comprises 764 residues: Protein translocase subunit SecA 2 (764 aa).

Residues Gln83, 101–105 (GEGKT), and Asp490 each bind ATP.

Belongs to the SecA family. As to quaternary structure, monomer and homodimer. Part of the essential Sec protein translocation apparatus which comprises SecA, SecYEG and auxiliary proteins SecDF. Other proteins may also be involved.

The protein resides in the cell membrane. It is found in the cytoplasm. The catalysed reaction is ATP + H2O + cellular proteinSide 1 = ADP + phosphate + cellular proteinSide 2.. Its function is as follows. Part of the Sec protein translocase complex. Interacts with the SecYEG preprotein conducting channel. Has a central role in coupling the hydrolysis of ATP to the transfer of proteins into and across the cell membrane, serving as an ATP-driven molecular motor driving the stepwise translocation of polypeptide chains across the membrane. The chain is Protein translocase subunit SecA 2 from Corynebacterium diphtheriae (strain ATCC 700971 / NCTC 13129 / Biotype gravis).